The chain runs to 534 residues: Beta-glucosidase 32 (534 aa).

Positions 1 to 22 are cleaved as a signal peptide; the sequence is MAIKLIALVITICVASWDSAQG. Gln51 lines the a beta-D-glucoside pocket. An N-linked (GlcNAc...) asparagine glycan is attached at Asn68. A beta-D-glucoside contacts are provided by residues His154 and 199-200; that span reads NE. Glu200 (proton donor) is an active-site residue. An intrachain disulfide couples Cys219 to Cys227. An a beta-D-glucoside-binding site is contributed by Tyr344. A glycan (N-linked (GlcNAc...) asparagine) is linked at Asn374. Residue Glu417 coordinates a beta-D-glucoside. Glu417 serves as the catalytic Nucleophile. Asn425 carries N-linked (GlcNAc...) asparagine glycosylation. A beta-D-glucoside is bound by residues Trp467, 474-475, and Phe483; that span reads EW.

This sequence belongs to the glycosyl hydrolase 1 family.

It carries out the reaction Hydrolysis of terminal, non-reducing beta-D-glucosyl residues with release of beta-D-glucose.. The sequence is that of Beta-glucosidase 32 from Arabidopsis thaliana (Mouse-ear cress).